Consider the following 185-residue polypeptide: Cell wall protein phiA (185 aa).

Residues 1-18 form the signal peptide; that stretch reads MQIKSFVLAASAAATASA. An N-linked (GlcNAc...) asparagine glycan is attached at asparagine 60.

This sequence belongs to the phiA family.

The protein resides in the secreted. It is found in the cell wall. In terms of biological role, cell wall protein involved in development of asexual structures such as phialide and conidium development, and thus required for spore formation. Plays a role as a general stress protectant produced by the fungus in competition with antagonistic bacteria. This chain is Cell wall protein phiA, found in Aspergillus fumigatus (strain CBS 144.89 / FGSC A1163 / CEA10) (Neosartorya fumigata).